Here is a 184-residue protein sequence, read N- to C-terminus: FMRFamide-related peptides (184 aa).

A propeptide spanning residues 1 to 44 (MLVSSSVLKDDSSLRIFKESPNEFEYIIKRHDMDDRKEDTESKE) is cleaved from the precursor. Position 56 is a phenylalanine amide (Phe-56). The propeptide occupies 59-83 (GQSFFNNLDNSAFDNEIDSKVSRHP). Phe-94 is modified (phenylalanine amide). Positions 97–107 (SGMKSTNDEQP) are excised as a propeptide. Phe-119 carries the phenylalanine amide modification. Residues 122-184 (NIQIVPTDFD…SLETNSNHRE (63 aa)) constitute a propeptide that is removed on maturation.

It belongs to the FARP (FMRFamide related peptide) family. As to expression, expressed throughout the central nervous system.

It is found in the secreted. Its function is as follows. In insects, FMRFamide and related peptides have modulatory actions at skeletal neuromuscular junctions, and peptides that are immunologically related to FMRFamide are released into the circulation from neurohemal organs. This Camponotus floridanus (Florida carpenter ant) protein is FMRFamide-related peptides.